Reading from the N-terminus, the 657-residue chain is MPIDRRAGSVKRRRIKFRDEAFSIHMTASITSTETQEGPVTSGFWALTLGSIGVVFGDIGTSPLYAFHEAVRGAAHGEPVTRVMVLGVLSLILWALLIVVTAKYVLLLLRADNNGEGGTLSLMALGQRALGRRSWFLLALGVVGASMFIGDSMITPAISVLSAVEGLKLATPALEHYVVPLTVLILVLLFAVQSKGTALVASAFGPVMVVWFTCIAVMGAVHIADDPSVLAAINPYYALQFLLSHGTIGLVTLGAVFLAVTGGEALYADLGHFGRKPIQAAWMFFVLPSLLINYFGQGALVLSDPSAIEHSFYRMVPEHLVLPLVGLATAATVIASQAVITGAYSLVYQAVQLGLLPRFEVRYTSESHAGQIYLPRVNRLLLIGVMLLVLLFHTPSNLASAYGIAVSTTMVADGIMGFVVIWKLWNWRAATAAAVILPFVVVDMSFFSANLLKLLEGAWVPLLFGAAMAGTIWTWRRGSGILIQKTRRIEVPLDDLIRSLEKRPPHIVKGTAVFLTSDPSFVPTALLHNLKHNKVLHEHNVVLTIETAHTPRVDLSERFRMEKISDKFSKVRLRFGFMEQPNVPKALAIARKQGWQFDIMSTSFFVSRRSLKASAQSGMPLWQDHLFIALSRSANDATDYFQIPTGRVVEVGTQVTI.

12 helical membrane passes run 40–60 (VTSG…GDIG), 88–108 (VLSL…VLLL), 135–155 (WFLL…SMIT), 172–192 (PALE…LFAV), 198–218 (ALVA…IAVM), 241–261 (FLLS…LAVT), 282–302 (WMFF…ALVL), 320–340 (LVLP…QAVI), 380–400 (LLLI…NLAS), 402–422 (YGIA…VVIW), 432–452 (AAAV…ANLL), and 454–474 (LLEG…TIWT).

It belongs to the HAK/KUP transporter (TC 2.A.72) family.

The protein localises to the cell inner membrane. It carries out the reaction K(+)(in) + H(+)(in) = K(+)(out) + H(+)(out). Transport of potassium into the cell. Likely operates as a K(+):H(+) symporter. The polypeptide is Probable potassium transport system protein Kup 1 (Bradyrhizobium diazoefficiens (strain JCM 10833 / BCRC 13528 / IAM 13628 / NBRC 14792 / USDA 110)).